Consider the following 554-residue polypeptide: Solute carrier family 22 member 1 (554 aa).

The Cytoplasmic segment spans residues 1-21 (MPTVDDILEQVGESGWFQKQA). Residues 22–42 (FLILCLLSAAFAPICVGIVFL) traverse the membrane as a helical segment. Residues 43–149 (GFTPDHHCQS…LVCADSWKLD (107 aa)) are Extracellular-facing. An N-linked (GlcNAc...) asparagine glycan is attached at N71. Residues 150–170 (LFQSCLNAGFLFGSLGVGYFA) traverse the membrane as a helical segment. The Cytoplasmic segment spans residues 171–176 (DRFGRK). The helical transmembrane segment at 177–197 (LCLLGTVLVNAVSGVLMAFSP) threads the bilayer. The Extracellular segment spans residues 198-206 (NYMSMLLFR). Residues 207–229 (LLQGLVSKGNWMAGYTLITEFVG) form a helical membrane-spanning segment. Residues 230 to 235 (SGSRRT) lie on the Cytoplasmic side of the membrane. Residues 236–256 (VAIMYQMAFTVGLVALTGLAY) form a helical membrane-spanning segment. Over 257-262 (ALPHWR) the chain is Extracellular. A helical membrane pass occupies residues 263–283 (WLQLAVSLPTFLFLLYYWCVP). The short motif at 283–287 (PESPR) is the Proline-rich sequence element. Topologically, residues 284 to 347 (ESPRWLLSQK…FRTPRLRKRT (64 aa)) are cytoplasmic. S333 is modified (phosphoserine). A helical membrane pass occupies residues 348 to 368 (FILMYLWFTDSVLYQGLILHM). Residues 369-376 (GATSGNLY) are Extracellular-facing. Residues 377-397 (LDFLYSALVEIPGAFIALITI) form a helical membrane-spanning segment. Residues 398–402 (DRVGR) lie on the Cytoplasmic side of the membrane. A helical transmembrane segment spans residues 403 to 423 (IYPMAMSNLLAGAACLVMIFI). The Extracellular portion of the chain corresponds to 424-431 (SPDLHWLN). The helical transmembrane segment at 432–452 (IIIMCVGRMGITIAIQMICLV) threads the bilayer. The Cytoplasmic segment spans residues 453-464 (NAELYPTFVRNL). Residues 465-485 (GVMVCSSLCDIGGIITPFIVF) form a helical membrane-spanning segment. At 486-492 (RLREVWQ) the chain is on the extracellular side. A helical membrane pass occupies residues 493-513 (ALPLILFAVLGLLAAGVTLLL). Residues 514–554 (PETKGVALPETMKDAENLGRKAKPKENTIYLKVQTSEPSGT) lie on the Cytoplasmic side of the membrane. Position 541 is a phosphothreonine (T541).

It belongs to the major facilitator (TC 2.A.1) superfamily. Organic cation transporter (TC 2.A.1.19) family. Post-translationally, phosphorylated. Widely expressed with high level in liver. In liver, expressed around the central vein. Expressed in kidney. Expressed in small intestine enterocytes. Localized to peritubular myoid cells, Leydig cells and moderately to the basal membrane of Sertoli cells in testes. Expressed in tracheal and bronchial ciliated epithelium in the respiratory tract. Also expressed in skeletal muscle, stomach, spleen, heart, placentacolon, brain, granulycytes and lympohocytes. As to expression, expressed in liver and in glial cell lines. In terms of tissue distribution, expressed in glial cell lines. Not expressed in liver.

The protein resides in the basolateral cell membrane. The protein localises to the apical cell membrane. It localises to the lateral cell membrane. Its subcellular location is the basal cell membrane. It is found in the cell membrane. It carries out the reaction 1-methylnicotinamide(out) = 1-methylnicotinamide(in). The catalysed reaction is dopamine(out) = dopamine(in). It catalyses the reaction serotonin(out) = serotonin(in). The enzyme catalyses (R)-adrenaline(out) = (R)-adrenaline(in). It carries out the reaction histamine(out) = histamine(in). The catalysed reaction is guanidine(out) = guanidine(in). It catalyses the reaction acetylcholine(in) = acetylcholine(out). The enzyme catalyses thiamine(in) = thiamine(out). It carries out the reaction agmatine(out) = agmatine(in). The catalysed reaction is putrescine(out) = putrescine(in). It catalyses the reaction spermidine(in) = spermidine(out). The enzyme catalyses L-histidyl-L-proline diketopiperazine(in) = L-histidyl-L-proline diketopiperazine(out). It carries out the reaction (R)-salsolinol(in) = (R)-salsolinol(out). The catalysed reaction is prostaglandin F2alpha(out) = prostaglandin F2alpha(in). It catalyses the reaction prostaglandin E2(out) = prostaglandin E2(in). Phosphorylation of the transporter leads to changes in its substrate affinity, resulting in a regulation of the transport activity. In contrast with rat ortholog, ASP uptake is inhibited by protein kinase A (PKA) and C (PKC) activation. ASP uptake is also endogenously activated by calmodulin, the calmodulin-dependent kinase II and LCK tyrosine kinase. Inhibited by cGMP, most likely through a cGMP-binding protein that interacts with OCT1. Electrogenic voltage-dependent transporter that mediates the transport of a variety of organic cations such as endogenous bioactive amines, cationic drugs and xenobiotics. Functions as a pH- and Na(+)-independent, bidirectional transporter. Cation cellular uptake or release is driven by the electrochemical potential (i.e. membrane potential and concentration gradient) and substrate selectivity. Hydrophobicity is a major requirement for recognition in polyvalent substrates and inhibitors. Primarily expressed at the basolateral membrane of hepatocytes and proximal tubules and involved in the uptake and disposition of cationic compounds by hepatic and renal clearance from the blood flow. Most likely functions as an uptake carrier in enterocytes contributing to the intestinal elimination of organic cations from the systemic circulation. Transports endogenous monoamines such as N-1-methylnicotinamide (NMN), guanidine, histamine, neurotransmitters dopamine, serotonin and adrenaline. Also transports natural polyamines such as spermidine, agmatine and putrescine at low affinity, but relatively high turnover. Involved in the hepatic uptake of vitamin B1/thiamine, hence regulating hepatic lipid and energy metabolism. Mediates the bidirectional transport of acetylcholine (ACh) at the apical membrane of ciliated cell in airway epithelium, thereby playing a role in luminal release of ACh from bronchial epithelium. Transports dopaminergic neuromodulators cyclo(his-pro) and salsolinol with lower efficency. Also capable of transporting non-amine endogenous compounds such as prostaglandin E2 (PGE2) and prostaglandin F2-alpha (PGF2-alpha). May contribute to the transport of cationic compounds in testes across the blood-testis-barrier. Also involved in the uptake of xenobiotics tributylmethylammonium (TBuMA), quinidine, N-methyl-quinine (NMQ), N-methyl-quinidine (NMQD) N-(4,4-azo-n-pentyl)-quinuclidine (APQ), azidoprocainamide methoiodide (AMP), N-(4,4-azo-n-pentyl)-21-deoxyajmalinium (APDA) and 4-(4-(dimethylamino)styryl)-N-methylpyridinium (ASP). Functionally, mediates the uptake of 1-methyl-4-phenylpyridinium (MPP(+)). Its function is as follows. Not able to uptake 1-methyl-4-phenylpyridinium (MPP(+)). This Homo sapiens (Human) protein is Solute carrier family 22 member 1.